The primary structure comprises 512 residues: 2,3-bisphosphoglycerate-independent phosphoglycerate mutase (512 aa).

Mn(2+) is bound by residues Asp-12 and Ser-62. The Phosphoserine intermediate role is filled by Ser-62. Substrate contacts are provided by residues His-123, 153-154 (RD), Arg-185, Arg-191, 260-263 (RPDR), and Lys-333. Mn(2+)-binding residues include Asp-400, His-404, Asp-441, His-442, and His-460.

It belongs to the BPG-independent phosphoglycerate mutase family. As to quaternary structure, monomer. Mn(2+) is required as a cofactor.

The enzyme catalyses (2R)-2-phosphoglycerate = (2R)-3-phosphoglycerate. It participates in carbohydrate degradation; glycolysis; pyruvate from D-glyceraldehyde 3-phosphate: step 3/5. In terms of biological role, catalyzes the interconversion of 2-phosphoglycerate and 3-phosphoglycerate. This is 2,3-bisphosphoglycerate-independent phosphoglycerate mutase from Clostridium perfringens (strain 13 / Type A).